We begin with the raw amino-acid sequence, 305 residues long: Formamidopyrimidine-DNA glycosylase (305 aa).

Proline 2 acts as the Schiff-base intermediate with DNA in catalysis. Glutamate 3 functions as the Proton donor in the catalytic mechanism. Lysine 59 serves as the catalytic Proton donor; for beta-elimination activity. The DNA site is built by histidine 92, arginine 111, and arginine 154. The FPG-type zinc-finger motif lies at 239 to 273 (QVFDRAGEPCPVCGTPIRKVAVAQRGTHFCPRCQP). Arginine 263 acts as the Proton donor; for delta-elimination activity in catalysis. A disordered region spans residues 282–305 (PRRARPGRRGNSVRVAAEPPGTYE).

This sequence belongs to the FPG family. In terms of assembly, monomer. Requires Zn(2+) as cofactor.

The catalysed reaction is Hydrolysis of DNA containing ring-opened 7-methylguanine residues, releasing 2,6-diamino-4-hydroxy-5-(N-methyl)formamidopyrimidine.. It catalyses the reaction 2'-deoxyribonucleotide-(2'-deoxyribose 5'-phosphate)-2'-deoxyribonucleotide-DNA = a 3'-end 2'-deoxyribonucleotide-(2,3-dehydro-2,3-deoxyribose 5'-phosphate)-DNA + a 5'-end 5'-phospho-2'-deoxyribonucleoside-DNA + H(+). In terms of biological role, involved in base excision repair of DNA damaged by oxidation or by mutagenic agents. Acts as a DNA glycosylase that recognizes and removes damaged bases. Has a preference for oxidized purines, such as 7,8-dihydro-8-oxoguanine (8-oxoG). Has AP (apurinic/apyrimidinic) lyase activity and introduces nicks in the DNA strand. Cleaves the DNA backbone by beta-delta elimination to generate a single-strand break at the site of the removed base with both 3'- and 5'-phosphates. This chain is Formamidopyrimidine-DNA glycosylase, found in Symbiobacterium thermophilum (strain DSM 24528 / JCM 14929 / IAM 14863 / T).